A 602-amino-acid polypeptide reads, in one-letter code: Sodium- and chloride-dependent GABA transporter 2 (602 aa).

A compositionally biased stretch (polar residues) spans methionine 1–glutamate 13. The interval methionine 1–glutamate 22 is disordered. Residues methionine 1 to glutamate 40 lie on the Cytoplasmic side of the membrane. Transmembrane regions (helical) follow at residues phenylalanine 41–leucine 61, glycine 68–leucine 88, and isoleucine 121–phenylalanine 141. The Extracellular segment spans residues serine 142–tryptophan 206. Cysteine 153 and cysteine 162 are oxidised to a cystine. An N-linked (GlcNAc...) asparagine glycan is attached at asparagine 173. A run of 2 helical transmembrane segments spans residues glutamate 207 to valine 227 and valine 233 to valine 253. Residue asparagine 269 is glycosylated (N-linked (GlcNAc...) asparagine). The next 7 membrane-spanning stretches (helical) occupy residues alanine 282 to serine 302, phenylalanine 319 to methionine 339, valine 366 to leucine 386, valine 418 to glycine 438, glycine 453 to alanine 473, proline 490 to phenylalanine 510, and tryptophan 528 to tryptophan 548. Over serine 549–cysteine 602 the chain is Cytoplasmic. Phosphothreonine is present on threonine 587. A Phosphoserine modification is found at serine 591.

Belongs to the sodium:neurotransmitter symporter (SNF) (TC 2.A.22) family. SLC6A13 subfamily. Expressed in brain, kidney, lung, liver and testis.

Its subcellular location is the cell membrane. It localises to the basolateral cell membrane. It carries out the reaction 4-aminobutanoate(out) + chloride(out) + 2 Na(+)(out) = 4-aminobutanoate(in) + chloride(in) + 2 Na(+)(in). It catalyses the reaction taurine(out) + chloride(out) + 2 Na(+)(out) = taurine(in) + chloride(in) + 2 Na(+)(in). The catalysed reaction is beta-alanine(out) + chloride(out) + 2 Na(+)(out) = beta-alanine(in) + chloride(in) + 2 Na(+)(in). The enzyme catalyses hypotaurine(out) + chloride(out) + 2 Na(+)(out) = hypotaurine(in) + chloride(in) + 2 Na(+)(in). GABA transport is inhibited by beta-alanine, 2,3-diaminopropionic acid and SNAP-5114. Functionally, mediates sodium- and chloride-dependent transport of gamma-aminobutyric acid (GABA). Mediates transport of beta-alanine. Can also mediate transport of taurine and hypotaurine. The polypeptide is Sodium- and chloride-dependent GABA transporter 2 (SLC6A13) (Homo sapiens (Human)).